The chain runs to 98 residues: NADH-ubiquinone oxidoreductase chain 4L (98 aa).

The next 3 helical transmembrane spans lie at serine 2–phenylalanine 22, serine 29–leucine 49, and isoleucine 61–valine 81.

The protein belongs to the complex I subunit 4L family. In terms of assembly, core subunit of respiratory chain NADH dehydrogenase (Complex I) which is composed of 45 different subunits.

The protein resides in the mitochondrion inner membrane. The catalysed reaction is a ubiquinone + NADH + 5 H(+)(in) = a ubiquinol + NAD(+) + 4 H(+)(out). Functionally, core subunit of the mitochondrial membrane respiratory chain NADH dehydrogenase (Complex I) which catalyzes electron transfer from NADH through the respiratory chain, using ubiquinone as an electron acceptor. Part of the enzyme membrane arm which is embedded in the lipid bilayer and involved in proton translocation. The chain is NADH-ubiquinone oxidoreductase chain 4L (MT-ND4L) from Galemys pyrenaicus (Iberian desman).